The chain runs to 250 residues: Oil body-associated protein 2B (250 aa).

Residues 1 to 29 (MSSSDQNPAATPASSGPAEPSPPGRPTAV) are disordered. Positions 8 to 18 (PAATPASSGPA) are enriched in low complexity.

This sequence belongs to the OBAP family.

In Zea mays (Maize), this protein is Oil body-associated protein 2B.